The chain runs to 131 residues: Small ribosomal subunit protein uS8 (131 aa).

Belongs to the universal ribosomal protein uS8 family. In terms of assembly, part of the 30S ribosomal subunit. Contacts proteins S5 and S12.

In terms of biological role, one of the primary rRNA binding proteins, it binds directly to 16S rRNA central domain where it helps coordinate assembly of the platform of the 30S subunit. This chain is Small ribosomal subunit protein uS8, found in Ruthia magnifica subsp. Calyptogena magnifica.